The primary structure comprises 326 residues: UDP-N-acetylglucosamine transporter (326 aa).

The next 8 helical transmembrane spans lie at 4 to 24 (NLKYLSLGILVFQTTSLVLTM), 38 to 58 (LSSTAVVVAELLKIMACILLV), 136 to 156 (LGVYQWLSLVILMTGVAFVQW), 174 to 194 (FVGLMAVLTACFSSGFAGVYF), 212 to 232 (LGFFGSIFGLMGVYVYDGELV), 244 to 264 (LTWIVVVLQALGGLVIAAVIK), 269 to 289 (ILKGFATSLSIILSTLISYFW), and 293 to 313 (FVPTSVFFLGAILVITATFLY).

Belongs to the nucleotide-sugar transporter family. SLC35A subfamily. In terms of assembly, interacts with SLC35A2; the interaction is reduced in the presence of SLC35A4. Found in a complex with SLC35A2 and SLC35A4. Interacts with MGAT4B. O-Glcnacylation regulates the stability of SLC35A3 and the specific complex formation with MGAT4B.

The protein localises to the golgi apparatus membrane. The catalysed reaction is UMP(out) + UDP-N-acetyl-alpha-D-glucosamine(in) = UMP(in) + UDP-N-acetyl-alpha-D-glucosamine(out). Transports diphosphate-N-acetylglucosamine (UDP-GlcNAc) from the cytosol into the lumen of the Golgi apparatus, functioning as an antiporter that exchanges UDP-N-acetyl-alpha-D-glucosamine for UMP. May supply UDP-GlcNAc as substrate for Golgi-resident glycosyltransferases that generate highly branched, multiantennary complex N-glycans and keratan sulfate. However, the exact role of SLC35A3 still needs to be elucidated, it could be a member of a catalytically more efficient multiprotein complex rather than function independently as a single transporter. This Bos taurus (Bovine) protein is UDP-N-acetylglucosamine transporter (SLC35A3).